Here is a 183-residue protein sequence, read N- to C-terminus: Pectinesterase inhibitor 8 (183 aa).

The signal sequence occupies residues 1–30 (MAQRASRRPAAAAAAVVVAVVLAVSGGVGA). 2 disulfides stabilise this stretch: C36–C51 and C107–C147.

The protein belongs to the PMEI family.

It is found in the secreted. It localises to the extracellular space. The protein resides in the apoplast. Pectin methylesterase (PME) inhibitor that inhibits PME in vitro. The sequence is that of Pectinesterase inhibitor 8 from Oryza sativa subsp. japonica (Rice).